The chain runs to 401 residues: Probable cysteine desulfurase (401 aa).

N6-(pyridoxal phosphate)lysine is present on K216.

Belongs to the class-V pyridoxal-phosphate-dependent aminotransferase family. Csd subfamily. Pyridoxal 5'-phosphate is required as a cofactor.

It carries out the reaction (sulfur carrier)-H + L-cysteine = (sulfur carrier)-SH + L-alanine. The protein is Probable cysteine desulfurase (csd) of Pyrococcus abyssi (strain GE5 / Orsay).